The chain runs to 139 residues: Transcription antitermination protein NusB (139 aa).

It belongs to the NusB family.

Involved in transcription antitermination. Required for transcription of ribosomal RNA (rRNA) genes. Binds specifically to the boxA antiterminator sequence of the ribosomal RNA (rrn) operons. This Nitratiruptor sp. (strain SB155-2) protein is Transcription antitermination protein NusB.